Reading from the N-terminus, the 307-residue chain is Coproporphyrin III ferrochelatase (307 aa).

Fe-coproporphyrin III is bound by residues tyrosine 12, arginine 29, 45 to 46 (RY), serine 53, and tyrosine 124. Fe(2+) is bound by residues histidine 181 and glutamate 263.

It belongs to the ferrochelatase family.

It localises to the cytoplasm. The catalysed reaction is Fe-coproporphyrin III + 2 H(+) = coproporphyrin III + Fe(2+). It functions in the pathway porphyrin-containing compound metabolism; protoheme biosynthesis. Involved in coproporphyrin-dependent heme b biosynthesis. Catalyzes the insertion of ferrous iron into coproporphyrin III to form Fe-coproporphyrin III. The protein is Coproporphyrin III ferrochelatase of Staphylococcus aureus (strain MRSA252).